The following is a 171-amino-acid chain: MSLGSTPSTPENLNPVTRTARQALILQILDKQKVTSQVQLSELLLDEGIDITQATLSRDLDELGARKVRPDGGRAYYAVGPVDSIAREDLRGPSEKLRRMLDELLVSTDHSGNIAMLRTPPGAAQYLASFIDRVGLKEVVGTIAGDDTVFVLARDPLTGKELGELLSGRTT.

The protein belongs to the ArgR family.

The protein localises to the cytoplasm. The protein operates within amino-acid biosynthesis; L-arginine biosynthesis [regulation]. Regulates arginine biosynthesis genes. The protein is Arginine repressor (argR) of Corynebacterium glutamicum (strain ATCC 13032 / DSM 20300 / JCM 1318 / BCRC 11384 / CCUG 27702 / LMG 3730 / NBRC 12168 / NCIMB 10025 / NRRL B-2784 / 534).